The chain runs to 249 residues: Anamorsin homolog (249 aa).

Residues 1 to 130 (MEQFKDLQKS…ETGSAARLSF (130 aa)) are N-terminal SAM-like domain. The interval 131 to 161 (AKKAAGVNVWKISGDDEELIDEEDLLDEADK) is linker. The [2Fe-2S] cluster site is built by Cys-172, Cys-181, Cys-184, and Cys-186. Positions 172-186 (CSTTGKRKACKNCSC) are fe-S binding site A. Cys-210, Cys-213, Cys-221, and Cys-224 together coordinate [4Fe-4S] cluster. Short sequence motifs (cx2C motif) lie at residues 210-213 (CGNC) and 221-224 (CSTC). Positions 210–224 (CGNCYLGDAFRCSTC) are fe-S binding site B.

The protein belongs to the anamorsin family. In terms of assembly, monomer. Requires [2Fe-2S] cluster as cofactor. [4Fe-4S] cluster is required as a cofactor.

It is found in the cytoplasm. It localises to the mitochondrion intermembrane space. Component of the cytosolic iron-sulfur (Fe-S) protein assembly (CIA) machinery. Required for the maturation of extramitochondrial Fe-S proteins. Part of an electron transfer chain functioning in an early step of cytosolic Fe-S biogenesis, facilitating the de novo assembly of a [4Fe-4S] cluster on the cytosolic Fe-S scaffold complex. Electrons are transferred from NADPH via a FAD- and FMN-containing diflavin oxidoreductase. Together with the diflavin oxidoreductase, also required for the assembly of the diferric tyrosyl radical cofactor of ribonucleotide reductase (RNR), probably by providing electrons for reduction during radical cofactor maturation in the catalytic small subunit. The sequence is that of Anamorsin homolog from Drosophila grimshawi (Hawaiian fruit fly).